The following is a 92-amino-acid chain: Cell division protein FtsB (92 aa).

Topologically, residues 1–3 (MRL) are cytoplasmic. A helical membrane pass occupies residues 4–21 (FIFLLVAVLLLFQYDFWF). Over 22 to 92 (GKNGYLDYKR…IFYHIVKEQK (71 aa)) the chain is Periplasmic. Residues 26–74 (YLDYKRTAQQIAQHKQENEKLSQRNQVVAAEIKDLKQGVEAIEERARFQ) adopt a coiled-coil conformation.

Belongs to the FtsB family. As to quaternary structure, part of a complex composed of FtsB, FtsL and FtsQ.

The protein localises to the cell inner membrane. Essential cell division protein. May link together the upstream cell division proteins, which are predominantly cytoplasmic, with the downstream cell division proteins, which are predominantly periplasmic. The sequence is that of Cell division protein FtsB from Pasteurella multocida (strain Pm70).